The chain runs to 541 residues: MGRQDQQLQVLNALDAAKTQWYHFTAIIVAGMGFFTDAYDLFCISLVTKLLGRIYYTDPASPTPGSLPPNIAAAVNGVALCGTLSGQLFFGWLGDKLGRKSVYGMTLLLMVICSIASGLSFSHTPTSVMATLCFFRFWLGFGIGGDYPLSATIMSEYANKKTRGAFIAAVFAMQGFGILAGGVVTLAMSAGFQAAFPAPAYEVNAAASTVPQADYVWRIILMLGALPAILTYYWRMKMPETARYTALVAKDAKQASSDMAKVLQVEIEVEEEKLQDITRGRDYGLFSARFAKRHGAHLLGTAATWFLVDVAYYSQNLFQKDIFTSIHWIPKARTMSELEEVFRISRAQTLIALCGTVPGYWFTVFLIDIIGRFKIQLLGFAGMTAFMLGLAIPYHHWTMPGNQVIFVFLYGFTFFFANFGPNATTFIVPAEIFPARLRSTCHGISAASGKAGAIIGAFGFLYAAQPQDKAHVDAGYKPGIGVRNALFVLAGCNLVGFLMTWMLVPESKGKSLEEMSGEADDEEASANGGATAVNSSGVEMV.

Residues 1 to 26 are Cytoplasmic-facing; the sequence is MGRQDQQLQVLNALDAAKTQWYHFTA. The chain crosses the membrane as a helical span at residues 27-47; it reads IIVAGMGFFTDAYDLFCISLV. At 48 to 70 the chain is on the extracellular side; it reads TKLLGRIYYTDPASPTPGSLPPN. Residues 71–91 traverse the membrane as a helical segment; that stretch reads IAAAVNGVALCGTLSGQLFFG. Residues 92–100 are Cytoplasmic-facing; sequence WLGDKLGRK. Residues 101–121 traverse the membrane as a helical segment; sequence SVYGMTLLLMVICSIASGLSF. Over 122-124 the chain is Extracellular; that stretch reads SHT. Residues 125-145 traverse the membrane as a helical segment; it reads PTSVMATLCFFRFWLGFGIGG. At 146–163 the chain is on the cytoplasmic side; it reads DYPLSATIMSEYANKKTR. A helical membrane pass occupies residues 164–184; that stretch reads GAFIAAVFAMQGFGILAGGVV. Over 185–213 the chain is Extracellular; sequence TLAMSAGFQAAFPAPAYEVNAAASTVPQA. The chain crosses the membrane as a helical span at residues 214 to 234; that stretch reads DYVWRIILMLGALPAILTYYW. Residues 235-297 are Cytoplasmic-facing; it reads RMKMPETARY…ARFAKRHGAH (63 aa). A helical transmembrane segment spans residues 298-318; that stretch reads LLGTAATWFLVDVAYYSQNLF. At 319–349 the chain is on the extracellular side; sequence QKDIFTSIHWIPKARTMSELEEVFRISRAQT. A helical transmembrane segment spans residues 350-370; it reads LIALCGTVPGYWFTVFLIDII. Topologically, residues 371–374 are cytoplasmic; sequence GRFK. A helical membrane pass occupies residues 375-395; sequence IQLLGFAGMTAFMLGLAIPYH. The Extracellular portion of the chain corresponds to 396 to 403; the sequence is HWTMPGNQ. Residues 404–424 form a helical membrane-spanning segment; sequence VIFVFLYGFTFFFANFGPNAT. The Cytoplasmic portion of the chain corresponds to 425-443; sequence TFIVPAEIFPARLRSTCHG. Residues 444–464 form a helical membrane-spanning segment; it reads ISAASGKAGAIIGAFGFLYAA. Over 465 to 484 the chain is Extracellular; sequence QPQDKAHVDAGYKPGIGVRN. The chain crosses the membrane as a helical span at residues 485–505; sequence ALFVLAGCNLVGFLMTWMLVP. The Cytoplasmic segment spans residues 506–541; that stretch reads ESKGKSLEEMSGEADDEEASANGGATAVNSSGVEMV. Residues 512-541 form a disordered region; that stretch reads LEEMSGEADDEEASANGGATAVNSSGVEMV. Residues 515–524 show a composition bias toward acidic residues; sequence MSGEADDEEA. Residues 532–541 are compositionally biased toward polar residues; sequence AVNSSGVEMV.

Belongs to the major facilitator superfamily. Phosphate:H(+) symporter (TC 2.A.1.9) family.

The protein resides in the membrane. High-affinity transporter for external inorganic phosphate. This is Probable inorganic phosphate transporter 1-12 (PHT1-12) from Oryza sativa subsp. japonica (Rice).